We begin with the raw amino-acid sequence, 422 residues long: MILVKDANINGKKQDLLVEGNIIKKIGNISISEVSKDETEIIDGKNCVLIPGLVNTHTHVPMSLFRGVADDIPLMEWLSGHIWPMESKLNEKIVYAGTLLGTIEMIKSGTTAFNDMYFFLDSIIKAVDETGIRSTIAYGMIDLFDEEKREKELKTAKESLEMIKNLNNSRITGALGPHAPYTCSKEILDSTNALAREYNVPIHIHMNETLDEINQVVEKTGIRPFEYLNSFGFFDNVNTICAHCVHLSDSEIQIMKEKNIFVAHNPVSNLKLASGVSPVLKLLENNISVTLGTDGCGSNNNMNLFEEIKAAALIHKGVNLNPVAVTAKEAFEFGTKNGAKALNINSGEIKEGKLADFVLINMKKPYLTPKENIESHLVYSFNGVVDTVVIDGKIVLNDGKMVNIDEEKVYELAEEAYLELAN.

Zn(2+) contacts are provided by His-57 and His-59. Substrate contacts are provided by Glu-86 and His-178. His-205 serves as a coordination point for Zn(2+). Glu-208 and Asp-294 together coordinate substrate. Residue Asp-294 participates in Zn(2+) binding.

This sequence belongs to the metallo-dependent hydrolases superfamily. MTA/SAH deaminase family. In terms of assembly, homotetramer. Zn(2+) serves as cofactor.

The enzyme catalyses 5'-deoxyadenosine + H2O + H(+) = 5'-deoxyinosine + NH4(+). The catalysed reaction is S-adenosyl-L-homocysteine + H2O + H(+) = S-inosyl-L-homocysteine + NH4(+). It carries out the reaction S-methyl-5'-thioadenosine + H2O + H(+) = S-methyl-5'-thioinosine + NH4(+). It catalyses the reaction adenosine + H2O + H(+) = inosine + NH4(+). It functions in the pathway amino-acid biosynthesis; S-adenosyl-L-methionine biosynthesis. Its function is as follows. Catalyzes the deamination of three SAM-derived enzymatic products, namely 5'-deoxyadenosine, S-adenosyl-L-homocysteine, and 5'-methylthioadenosine, to produce the inosine analogs. Can also deaminate adenosine. The preferred substrate for this enzyme is 5'-deoxyadenosine, but all these substrates are efficiently deaminated. Likely functions in a S-adenosyl-L-methionine (SAM) recycling pathway from S-adenosyl-L-homocysteine (SAH) produced from SAM-dependent methylation reactions. May also be involved in the recycling of 5'-deoxyadenosine, whereupon the 5'-deoxyribose moiety of 5'-deoxyinosine is further metabolized to deoxyhexoses used for the biosynthesis of aromatic amino acids in methanogens. This Methanococcus maripaludis (strain C6 / ATCC BAA-1332) protein is 5'-deoxyadenosine deaminase.